Reading from the N-terminus, the 176-residue chain is Epididymal-specific lipocalin-9 (176 aa).

A signal peptide spans 1–15; that stretch reads MALLLLSLGLSLIAA. N-linked (GlcNAc...) asparagine glycans are attached at residues Asn-68 and Asn-129. Cys-83 and Cys-161 are disulfide-bonded.

It belongs to the calycin superfamily. Lipocalin family.

It is found in the secreted. In Homo sapiens (Human), this protein is Epididymal-specific lipocalin-9.